Consider the following 149-residue polypeptide: Ribonuclease pancreatic (149 aa).

The first 25 residues, 1 to 25 (MGLEKSLMLFPLFVLLLGWVQPSLG), serve as a signal peptide directing secretion. The segment at 30 to 49 (AQKFQRQHMDPAGSSSNSPT) is disordered. Substrate contacts are provided by K32 and R35. H37 serves as the catalytic Proton acceptor. 4 disulfide bridges follow: C51-C109, C65-C120, C83-C135, and C90-C97. Substrate is bound at residue 66 to 70 (KPVNT). N87 is a glycosylation site (N-linked (GlcNAc...) asparagine). K91 contacts substrate. The active-site Proton donor is the H144.

It belongs to the pancreatic ribonuclease family. Monomer. Interacts with and forms tight 1:1 complexes with RNH1. Dimerization of two such complexes may occur. Interaction with RNH1 inhibits this protein. As to expression, pancreas.

It localises to the secreted. The catalysed reaction is an [RNA] containing cytidine + H2O = an [RNA]-3'-cytidine-3'-phosphate + a 5'-hydroxy-ribonucleotide-3'-[RNA].. It carries out the reaction an [RNA] containing uridine + H2O = an [RNA]-3'-uridine-3'-phosphate + a 5'-hydroxy-ribonucleotide-3'-[RNA].. Functionally, endonuclease that catalyzes the cleavage of RNA on the 3' side of pyrimidine nucleotides. Acts on single-stranded and double-stranded RNA. This is Ribonuclease pancreatic (Rnase1) from Mus saxicola (Brown spiny mouse).